The following is a 30-amino-acid chain: L-amino-acid oxidase (30 aa).

The protein belongs to the flavin monoamine oxidase family. FIG1 subfamily. In terms of assembly, monomer. This is in contrast with most of its orthologs, that are non-covalently linked homodimers. Requires FAD as cofactor. Post-translationally, N-glycosylated. As to expression, expressed by the venom gland.

It localises to the secreted. The catalysed reaction is an L-alpha-amino acid + O2 + H2O = a 2-oxocarboxylate + H2O2 + NH4(+). The enzyme catalyses L-leucine + O2 + H2O = 4-methyl-2-oxopentanoate + H2O2 + NH4(+). It catalyses the reaction L-phenylalanine + O2 + H2O = 3-phenylpyruvate + H2O2 + NH4(+). It carries out the reaction L-tryptophan + O2 + H2O = indole-3-pyruvate + H2O2 + NH4(+). The catalysed reaction is L-methionine + O2 + H2O = 4-methylsulfanyl-2-oxobutanoate + H2O2 + NH4(+). The enzyme catalyses L-2-aminohexanoate + O2 + H2O = 2-oxohexanoate + H2O2 + NH4(+). It catalyses the reaction L-tyrosine + O2 + H2O = 3-(4-hydroxyphenyl)pyruvate + H2O2 + NH4(+). In terms of biological role, catalyzes an oxidative deamination of predominantly hydrophobic and aromatic L-amino acids, thus producing hydrogen peroxide that may contribute to the diverse toxic effects of this enzyme. Is highly active against L-Met, L-Leu, L-norleucine (L-2-aminohexanoate), L-Trp, L-Phe, moderately active against L-Tyr, and no active on L-Gly, L-Ala, L-Val, L-Pro, L-His, L-Lys, L-Arg, L-Asp, L-Asn, L-Gln, L-Glu, L-Ser, and L-Thr. Exhibits diverse biological activities, such as hemorrhage, hemolysis, edema, antibacterial and antiparasitic activities. In addition, this protein induces apoptosis. It also interacts with endothelial cells, and inhibits collagen- and ADP-induced platelet aggregation. L-LAAO family effects on platelets are controversial, since it either induces aggregation or inhibits agonist-induced aggregation. These different effects are probably due to different experimental conditions. This is L-amino-acid oxidase from Bothrops leucurus (Whitetail lancehead).